A 458-amino-acid chain; its full sequence is Protein amnionless (458 aa).

Positions 1 to 19 are cleaved as a signal peptide; that stretch reads MGALGRVLLWLQLCAMTRA. Residues 20–362 lie on the Extracellular side of the membrane; that stretch reads AYKLWVPNTS…ELNQSSSGAG (343 aa). An N-linked (GlcNAc...) asparagine glycan is attached at N27. Disulfide bonds link C43/C96, C137/C213, C205/C211, C223/C249, C234/C250, and C239/C253. Residues 67–87 are interaction with CUBN; it reads SDMLLPLDGELVLASGAALSA. The VWFC domain maps to 203-254; it reads QACTDASGCVCGNAEMLPWICASLLQPLGGRCPQAACQDPLLPQGQCCDLCG. Residue N355 is glycosylated (N-linked (GlcNAc...) asparagine). Residues 363–383 form a helical membrane-spanning segment; the sequence is LAGGVAALVLLALLGTVLLLL. The Cytoplasmic portion of the chain corresponds to 384-458; that stretch reads HRSGRLRWRR…LFAGEAEAEA (75 aa).

As to quaternary structure, interacts (via extracellular region) with CUBN/cubilin. This gives rise to a huge complex containing one AMN chain and three CUBN chains. In terms of processing, N-glycosylated. Post-translationally, a soluble form arises by proteolytic removal of the membrane anchor. As to expression, expressed in polarized epithelial cells which are specialized in resorption or transport, specifically kidney proximal tubules and intestinal epithelium.

The protein localises to the apical cell membrane. Its subcellular location is the cell membrane. The protein resides in the endosome membrane. It localises to the membrane. It is found in the coated pit. Functionally, membrane-bound component of the endocytic receptor formed by AMN and CUBN. Required for normal CUBN glycosylation and trafficking to the cell surface. The complex formed by AMN and CUBN is required for efficient absorption of vitamin B12. Required for normal CUBN-mediated protein transport in the kidney. This Mus musculus (Mouse) protein is Protein amnionless (Amn).